The primary structure comprises 199 residues: Elongation factor Ts, chloroplastic (199 aa).

The protein belongs to the EF-Ts family.

The protein localises to the plastid. It localises to the chloroplast. Functionally, associates with the EF-Tu.GDP complex and induces the exchange of GDP to GTP. It remains bound to the aminoacyl-tRNA.EF-Tu.GTP complex up to the GTP hydrolysis stage on the ribosome. This chain is Elongation factor Ts, chloroplastic (tsf), found in Galdieria sulphuraria (Red alga).